We begin with the raw amino-acid sequence, 582 residues long: Aspartate--tRNA ligase (582 aa).

Residue glutamate 174 participates in L-aspartate binding. The tract at residues 198 to 201 is aspartate; that stretch reads QITK. Arginine 220 contributes to the L-aspartate binding site. ATP contacts are provided by residues 220 to 222 and glutamine 229; that span reads RDE. L-aspartate is bound at residue histidine 443. Glutamate 477 lines the ATP pocket. Position 484 (arginine 484) interacts with L-aspartate. 529-532 is an ATP binding site; sequence GLDR.

It belongs to the class-II aminoacyl-tRNA synthetase family. Type 1 subfamily. As to quaternary structure, homodimer.

Its subcellular location is the cytoplasm. It carries out the reaction tRNA(Asp) + L-aspartate + ATP = L-aspartyl-tRNA(Asp) + AMP + diphosphate. Functionally, catalyzes the attachment of L-aspartate to tRNA(Asp) in a two-step reaction: L-aspartate is first activated by ATP to form Asp-AMP and then transferred to the acceptor end of tRNA(Asp). The protein is Aspartate--tRNA ligase of Streptococcus pyogenes serotype M28 (strain MGAS6180).